We begin with the raw amino-acid sequence, 584 residues long: Cationic amino acid transporter 7, chloroplastic (584 aa).

A chloroplast-targeting transit peptide spans 1-49; that stretch reads MEAQYRNHDGDTSFSSLRVYLNSLSDTPSRFSRRAVSVSTSYDEMSRVR. The next 14 membrane-spanning stretches (helical) occupy residues 62-82, 90-110, 131-151, 185-205, 214-234, 254-274, 293-313, 346-366, 396-416, 417-437, 449-469, 480-500, 508-528, and 540-560; these read WYDL…FVTT, AGPS…LSAF, ITFG…DYVL, GFNE…FVIC, VNMV…VMGF, FFPF…LSYI, IPMG…LMAI, VVGI…MLGQ, ASAF…LNVL, LNLV…AVIF, WPTL…TLVW, FILG…HCVV, FWGV…NIFL, and FGFF…HASY.

The protein belongs to the amino acid-polyamine-organocation (APC) superfamily. Cationic amino acid transporter (CAT) (TC 2.A.3.3) family.

It localises to the plastid. It is found in the chloroplast membrane. Functionally, permease involved in the transport of the cationic amino acids. This chain is Cationic amino acid transporter 7, chloroplastic (CAT7), found in Arabidopsis thaliana (Mouse-ear cress).